The chain runs to 200 residues: Translation machinery-associated protein 22 (200 aa).

Positions valine 95–leucine 166 constitute an SUI1 domain.

Belongs to the DENR family. As to quaternary structure, interacts with the 40S ribosomal subunit.

The protein resides in the cytoplasm. The sequence is that of Translation machinery-associated protein 22 (TMA22) from Kluyveromyces lactis (strain ATCC 8585 / CBS 2359 / DSM 70799 / NBRC 1267 / NRRL Y-1140 / WM37) (Yeast).